We begin with the raw amino-acid sequence, 130 residues long: Small ribosomal subunit protein uS8 (130 aa).

This sequence belongs to the universal ribosomal protein uS8 family. In terms of assembly, part of the 30S ribosomal subunit. Contacts proteins S5 and S12.

Its function is as follows. One of the primary rRNA binding proteins, it binds directly to 16S rRNA central domain where it helps coordinate assembly of the platform of the 30S subunit. This Alcanivorax borkumensis (strain ATCC 700651 / DSM 11573 / NCIMB 13689 / SK2) protein is Small ribosomal subunit protein uS8.